The chain runs to 144 residues: Maximins 3/H9 type 2 (144 aa).

A signal peptide spans 1–18 (MNFKYIVAVSFLIASAYA). Propeptides lie at residues 19-43 (RSVQ…REIR) and 74-123 (TAEE…KEKR). I143 is subject to Isoleucine amide.

Belongs to the bombinin family. Expressed by the skin glands.

The protein resides in the secreted. Functionally, maximin-3 shows antibacterial activity against both Gram-positive and Gram-negative bacteria. It also shows antimicrobial activity against the fungus C.albicans, but not against A.flavus nor P.uticale. It has little hemolytic activity. It possess a significant cytotoxicity against tumor cell lines. It possess a significant anti-HIV activity. It shows high spermicidal activity. In terms of biological role, maximin-H9 shows antimicrobial activity against bacteria and against the fungus C.albicans. Shows strong hemolytic activity. This Bombina maxima (Giant fire-bellied toad) protein is Maximins 3/H9 type 2.